We begin with the raw amino-acid sequence, 2704 residues long: MNNKFIIFSLLLALVASQTYSLTSCTCAQLLSEGDCIKNVSLGCSWDTTKKTCGVSTTPVTPTVTYAAYCDTFAETDCPKAKPCTDCGNYAACAWVESKCTFFTGCTPFAKTLDSECQAISNRCITDGTHCVEVDACSTYKKQLPCVKNAAGSLCYWDTTNNTCDKLPATFATDKDCRDVISTCTTKTGGGCVDSGNNCSDQTLEIQCVWNKLKTTSCYWDGAACKDRICDNAPTSLTTDDACKTFRTDGTCTTKANGGCVTRTTCAAATIQASCIKNSSGGDCYWTGTACVDKTCANAPTTMTTNSACAGFVTGCITKSGGGCVANGACSVANVQAACVKNSSNFDCIWDTTCKEKTCANAPTTNNTHDLCTSYLSTCTVKSGGGCQNRSCANAPTTMTTNDACEAYLTGNNCITKSGGGCVTNTTCAAITLEAACVKNSSGSTCFWDTASSSCKDKTCVNAPATNTTHDLCQAFLNTCTVNSTSAGCVEKTCENSLVLAICDKDTSSRACIWKGKCYKKQCVLASSATTTHADCQTYHSTCTLSNSGTGCVPLPLKCEAITIEAACNLKANGQPCGWNGSQCIDKACSTASKTFTTTSQCTGHISTCVANNPVTVNGSLTIQGCQDLPTSCAARKSSENCEIARVGFPTCLWVSSSTSCVEKSCATASTVGTTGALSAGGFTFSGCQTYLNTCISNNTADGCIAKPSSCSSLVSSNCRDGSKASGDCYWNGSSCVDKTCANITLTSHASCYSIFNQCTVNNGGTACQTLATACTSYSTQENCKFTSTNKNCVWTGLACRNATCADAPDTTAYDSDTECLAYPTPSETCTVVYKVGAQGCVSKSANCSDYMTSAQCHKTLTNLTANDDCKWIVDRCYALSSFATGACTTFKGNKTMCEGYRAGCTNTVGAASSASCTLDCTLKTGSGLTFADCQALDSTCSVKKDGTGCIVIQSTCAGYGSTATNCFRSSASGTAGYCAMNTNCQSVTSAAECAFVTGLTGLDHSKCQLYHSSCTSLKDGTGCQEYKTACSSYATGNTCANSVQGKCFDDATDCLRFANCASITGTGLTNTICVTYDPGCVANVNGTACQEKLATCAAYLTQNSCSTSTAGTCAWSGSACLTVVDANVATECAYITGTGLTNAICAGYNAKCTVNRAGTACQKKEALCATYAAVQATCSQSDAGLCAWSGSACLTVVDANVATECPYITGTGLTNAICAGYNAKCTVNRAGTACQKKEALCATYAAVQATCSQSDAGLCAWSGSACLTVVDANVATECPYITGTGLTDAICAGYNAKCTVNRAGTACQKKEALCATYAAVQATCSQSDAGLCAWSGSACLTVVDANVATECPYITGTGLTNAICAGYNAKCTVNRAGTACQKKEALCATYAAVQATCSQSDAGLCAWSGSACLTVVDANVATECAYITGTGLTDAICAGYNAKCTNLKDGTGCQDEKATCKLYTTQNKCTSQTTGPLSCLWFDNSCSPITDVTCSAIVQSGLDHAQCQAYSTGCTSVSDGSKCQDFKTTCEQYAGTALSCTKTATSKCYLQGSNCITISNVATDCAKITGSAGTITYEICQSYNTGCSVNRARSACVQQQAQCSGYTSAMTSCYKSGAGLCIASTNTDTACVAATAATTCDAVYLGTGNYSSANCNEMKAGCTNNGATACVAKTCANAVVIFNHTNCNGYLNTCTVNSGNSACQTMASKCADQTQASCLYSVEGECVVVGTSCVRKTCDTAATDATRDDDTECSAYQQSCTVARLGACQARAACASYKSSLQCKFNTSGGRCFWNPTNKTCVDLNCGNIEASTLYDTHNECVVVDATLACTVRATNGAAVQGCMARGACSSYTIEEQCKTNASNGVCVWNTNANLPAPACQDKSCTSAPTSTTTHNDCYAYYNTATVKCTVVATPSNSGGNPTLGGCQQTAACSSYIDKEQCQINANGEPCGWNGTQCADKSCATAPATADYDDDTKCRAYITNKCTVSDSGQGCVEIPATCETMTQKQCYYNKAGDPCYWTGTACITKSCDNAPDATATADECNTYLAGCTLDNVKCKTKVCEDFAFATDALCKQAISTCTTNGTNCVTRGTCFQALSQAGCVTSSTNQQCEWIPAVLNASNVITSPAYCTIKNCSTAPITLTSEAACAGYFTNCTTKNGGGCVTKSTCSAVTIDVACTTALNGTVCAWDSAQNKCRDKDCQDFSGTTHAACQAQRAGCTAGASGKCARVQNCEQTSVRAACIEGTNGPCLWIDKYQNTDGTKGACFRYTSCKSLNWNNDSSCKWISNKCTTNGSNCVGITLCSETNTDGGCVTGYDGACIQSVPALNSSDPKVCKPYTSCADAFYTTHSDCQIASSKCTTNGTTGCIALGSCSSYTAQAGCYFNDKGTLYTSGVITSTGICTWDTTSSSCRDQSCADLTGTTHATCSSQLSTCTSDGTTCLLKGACTSYTTQTACTTAVGSDGACYWELASATNNNTAKCRLLTCADIQNGTATNVCSVALSTCVSNGTACIPKANCSTYTSKIACNSGGLDGICVFTQSTATGAAAGTGTCALMTACTVANNDQTACQAARDRCSWTAASGTGATAVASKCATHTCATNQATNGACTRFLNWDKKTQQVCTLVSGACTATDPSTLSSNDCFLVSGYTYTWNASTSKCGVCTAVVVQPNTTDNNTNTTDNNTTTDSGYILGLSIVLGYLMF.

Residues 1 to 20 (MNNKFIIFSLLLALVASQTY) form the signal peptide. PSA repeat units lie at residues 112–165 (TLDS…NTCD), 172–231 (ATDK…RICD), 238–297 (TTDD…KTCA), 304–360 (TTNS…KTCA), 400–460 (TTND…DKTC), 468–523 (TTHD…KKQC), 530–590 (TTTH…KACS), 596–667 (FTTT…KSCA), 683–742 (FTFS…KTCA), 747–806 (TSHA…ATCA), 815–881 (DSDT…YALS), 929–994 (LTFA…AAEC), 1003–1061 (LDHS…FANC), 1069–1123 (LTNT…ACLT), 1141–1196 (LTNA…ACLT), 1214–1269 (LTNA…ACLT), 1287–1342 (LTDA…ACLT), 1360–1415 (LTNA…ACLT), 1433–1495 (LTDA…DVTC), 1503–1566 (LDHA…ATDC), 1576–1641 (ITYE…ATTC), 1684–1740 (NHTN…KTCD), 1750–1807 (DDTE…DLNC), 1817–1887 (DTHN…KSCT), 1893–1965 (TTTH…KSCA), 1974–2033 (DDDT…KSCD), 2070–2137 (ATDA…IKNC), 2145–2204 (TSEA…KDCQ), 2209–2274 (TTHA…YTSC), 2348–2419 (YTTH…QSCA), and 2424–2489 (TTHA…LTCA).

Its subcellular location is the cell membrane. Functionally, this protein is the surface antigen or immobilization antigen of Paramecium primaurelia. The sequence is that of G surface protein, allelic form 168 (168G) from Paramecium primaurelia.